We begin with the raw amino-acid sequence, 120 residues long: MKLKVLPPTLRKNNRYLALDIKVKSVISKDDLVNIVWNGCIRFFGENGTGNFSLWVMKFYELEKTDEYNHYQAILRCQREYVDEVRASLALIYKHNRKDISVSTIGLSGTIKACQKFIEK.

It belongs to the eukaryotic/archaeal RNase P protein component 2 family. As to quaternary structure, consists of a catalytic RNA component and at least 4-5 protein subunits.

The protein localises to the cytoplasm. It carries out the reaction Endonucleolytic cleavage of RNA, removing 5'-extranucleotides from tRNA precursor.. Functionally, part of ribonuclease P, a protein complex that generates mature tRNA molecules by cleaving their 5'-ends. This chain is Ribonuclease P protein component 2, found in Methanobrevibacter smithii (strain ATCC 35061 / DSM 861 / OCM 144 / PS).